Reading from the N-terminus, the 257-residue chain is Acetylglutamate kinase (257 aa).

Substrate-binding positions include 43 to 44, Arg-65, and Asn-157; that span reads GG. ATP is bound by residues 180–185 and 208–210; these read DVSGIL and IIT.

The protein belongs to the acetylglutamate kinase family. ArgB subfamily. Homodimer.

It localises to the cytoplasm. It catalyses the reaction N-acetyl-L-glutamate + ATP = N-acetyl-L-glutamyl 5-phosphate + ADP. The protein operates within amino-acid biosynthesis; L-arginine biosynthesis; N(2)-acetyl-L-ornithine from L-glutamate: step 2/4. In terms of biological role, catalyzes the ATP-dependent phosphorylation of N-acetyl-L-glutamate. In Photorhabdus laumondii subsp. laumondii (strain DSM 15139 / CIP 105565 / TT01) (Photorhabdus luminescens subsp. laumondii), this protein is Acetylglutamate kinase.